Reading from the N-terminus, the 709-residue chain is ATP-binding cassette sub-family F member 3 (709 aa).

The residue at position 2 (alanine 2) is an N-acetylalanine. Residues 129-143 (RLKAKQEKRSEKETL) show a composition bias toward basic and acidic residues. The tract at residues 129 to 171 (RLKAKQEKRSEKETLKTSSPLVLEEASASQAGSRKESRLESSG) is disordered. Serine 155, serine 157, and serine 161 each carry phosphoserine. The segment covering 161–171 (SRKESRLESSG) has biased composition (basic and acidic residues). 2 consecutive ABC transporter domains span residues 178 to 424 (VRIE…LNQQ) and 492 to 707 (LQLD…RREG). 210–217 (GRNGLGKT) is a binding site for ATP. Serine 283 is modified (phosphoserine). 525–532 (GENGAGKS) contacts ATP.

Belongs to the ABC transporter superfamily. ABCF family. EF3 subfamily.

Displays an antiviral effect against flaviviruses such as west Nile virus (WNV) in the presence of OAS1B. In Rattus norvegicus (Rat), this protein is ATP-binding cassette sub-family F member 3 (Abcf3).